We begin with the raw amino-acid sequence, 282 residues long: Bifunctional protein FolD (282 aa).

Residues 165–167 (NRS), Ser-190, and Ile-231 contribute to the NADP(+) site.

It belongs to the tetrahydrofolate dehydrogenase/cyclohydrolase family. Homodimer.

It carries out the reaction (6R)-5,10-methylene-5,6,7,8-tetrahydrofolate + NADP(+) = (6R)-5,10-methenyltetrahydrofolate + NADPH. The catalysed reaction is (6R)-5,10-methenyltetrahydrofolate + H2O = (6R)-10-formyltetrahydrofolate + H(+). It functions in the pathway one-carbon metabolism; tetrahydrofolate interconversion. In terms of biological role, catalyzes the oxidation of 5,10-methylenetetrahydrofolate to 5,10-methenyltetrahydrofolate and then the hydrolysis of 5,10-methenyltetrahydrofolate to 10-formyltetrahydrofolate. This is Bifunctional protein FolD from Clostridium botulinum (strain ATCC 19397 / Type A).